The chain runs to 129 residues: uncharacterized protein (129 aa).

The HIT domain maps to 3 to 109 (IFCKIINGEI…IPRYEGDGEV (107 aa)). The Histidine triad motif motif lies at 94-98 (HVHFH).

This is an uncharacterized protein from Methanocaldococcus jannaschii (strain ATCC 43067 / DSM 2661 / JAL-1 / JCM 10045 / NBRC 100440) (Methanococcus jannaschii).